We begin with the raw amino-acid sequence, 125 residues long: uncharacterized protein (125 aa).

The segment at Met1–Ser21 is disordered. Over residues Ser7 to Ser21 the composition is skewed to low complexity.

This is an uncharacterized protein from Saccharomyces cerevisiae (strain ATCC 204508 / S288c) (Baker's yeast).